The chain runs to 245 residues: MNKNIKYSQNFLTSEKVLNQIIKQLNLKETDTVYEIGTGKGHLTTKLAKISKQVTSIELDSHLFNLSSEKLKSNTRVTLIHQDILQFQFPNKQRYKIVGNIPYHLSTQIIKKVVFESHASDIYLIVEEGFYKRTLDIHRTLGLLLHTQVSIQQLLKLPAECFHPKPRVNSVLIKLTRHTTDVPDKYWKLYTYFVSKWVNREYRQLFTKNQFHQAMKHAKVNNLSTVTYEQVLSIFNSYLLFNGRK.

Residues asparagine 10, leucine 12, glycine 37, glutamate 58, aspartate 83, and asparagine 100 each contribute to the S-adenosyl-L-methionine site.

The protein belongs to the class I-like SAM-binding methyltransferase superfamily. rRNA adenine N(6)-methyltransferase family.

It carries out the reaction adenosine(2085) in 23S rRNA + 2 S-adenosyl-L-methionine = N(6)-dimethyladenosine(2085) in 23S rRNA + 2 S-adenosyl-L-homocysteine + 2 H(+). Its function is as follows. This protein produces a dimethylation of the adenine residue at position 2085 in 23S rRNA, resulting in reduced affinity between ribosomes and macrolide-lincosamide-streptogramin B antibiotics. In Escherichia coli, this protein is rRNA adenine N-6-methyltransferase (ermBC).